Here is a 504-residue protein sequence, read N- to C-terminus: Putative F-box/FBD/LRR-repeat protein At3g59240 (504 aa).

In terms of domain architecture, F-box spans 7–60 (KDIISDLPEALICHLLSFVPTKEAALTSLLSEKWRYLFAFAPILDFDDSVWMQS). LRR repeat units follow at residues 69–95 (HRKF…SLNC), 145–171 (RIRT…DLSS), 173–198 (WFRD…TMSD), 286–312 (TNLF…TFCC), 329–354 (DKDV…VFKG), 369–396 (CLCK…KFGE), and 403–428 (DEEK…ILHY). The FBD domain maps to 382–427 (SSSPVKVLKILKFGEVASYFGDEEKQLELVKYFLETMPNLEQMILH).

This chain is Putative F-box/FBD/LRR-repeat protein At3g59240, found in Arabidopsis thaliana (Mouse-ear cress).